The primary structure comprises 172 residues: Small ribosomal subunit protein uS5 (172 aa).

The 64-residue stretch at 16–79 (LKEKLVHINR…EDGKKNVIKV (64 aa)) folds into the S5 DRBM domain.

The protein belongs to the universal ribosomal protein uS5 family. Part of the 30S ribosomal subunit. Contacts proteins S4 and S8.

In terms of biological role, with S4 and S12 plays an important role in translational accuracy. Functionally, located at the back of the 30S subunit body where it stabilizes the conformation of the head with respect to the body. In Pelodictyon phaeoclathratiforme (strain DSM 5477 / BU-1), this protein is Small ribosomal subunit protein uS5.